The sequence spans 687 residues: Auxin response factor 14 (687 aa).

The segment at residues 133–235 (FCKTLTASDT…QLRLGVRRAV (103 aa)) is a DNA-binding region (TF-B3).

This sequence belongs to the ARF family. Homo and heterodimers. Expressed in roots, culms, leaves and young panicles.

Its subcellular location is the nucleus. Auxin response factors (ARFs) are transcriptional factors that bind specifically to the DNA sequence 5'-TGTCTC-3' found in the auxin-responsive promoter elements (AuxREs). The polypeptide is Auxin response factor 14 (ARF14) (Oryza sativa subsp. japonica (Rice)).